We begin with the raw amino-acid sequence, 310 residues long: MAVSVQDLLDKIHFHVIYSTETALQKEITTSEIMRPGLEMAGYFDYFTPERIQLFGMKEWSYMMTVVGDNRYDLLKKVMAKETPVVIVARNLEIPSEMVAAAKKADIVLLQSREATSRLNSVLTSFLDERLAERTTVHGVLMDIFGVGVLIQGASGIGKSETGLELVKRGHRLVADDRVDVFQRDAFTLSGEPAEILRNMIEIRGVGIIDVMSLFGAGAVKDSTDIDMVIYLEYYDKEKAFDRLGNAPTIVEFSDVEVPQTRIPVKTGRNVSVIVEAAVMNFRAKQMGFDATKTFEDRLTDLISHNKESQ.

Catalysis depends on residues H138 and K159. 153 to 160 (GASGIGKS) is a binding site for ATP. S160 lines the Mg(2+) pocket. The Proton acceptor; for phosphorylation activity. Proton donor; for dephosphorylation activity role is filled by D177. Residues 201–210 (IEIRGVGIID) are important for the catalytic mechanism of both phosphorylation and dephosphorylation. Mg(2+) is bound at residue E202. R243 is an active-site residue. Residues 264-269 (PVKTGR) are important for the catalytic mechanism of dephosphorylation.

The protein belongs to the HPrK/P family. In terms of assembly, homohexamer. The cofactor is Mg(2+).

It carries out the reaction [HPr protein]-L-serine + ATP = [HPr protein]-O-phospho-L-serine + ADP + H(+). The catalysed reaction is [HPr protein]-O-phospho-L-serine + phosphate + H(+) = [HPr protein]-L-serine + diphosphate. In terms of biological role, catalyzes the ATP- as well as the pyrophosphate-dependent phosphorylation of a specific serine residue in HPr, a phosphocarrier protein of the phosphoenolpyruvate-dependent sugar phosphotransferase system (PTS). HprK/P also catalyzes the pyrophosphate-producing, inorganic phosphate-dependent dephosphorylation (phosphorolysis) of seryl-phosphorylated HPr (P-Ser-HPr). The two antagonistic activities of HprK/P are regulated by several intracellular metabolites, which change their concentration in response to the absence or presence of rapidly metabolisable carbon sources (glucose, fructose, etc.) in the growth medium. Therefore, by controlling the phosphorylation state of HPr, HPrK/P is a sensor enzyme that plays a major role in the regulation of carbon metabolism and sugar transport: it mediates carbon catabolite repression (CCR), and regulates PTS-catalyzed carbohydrate uptake and inducer exclusion. This is HPr kinase/phosphorylase from Lactococcus lactis subsp. cremoris (strain SK11).